A 165-amino-acid polypeptide reads, in one-letter code: MFGSRKASRRRSYRSRSTMGSRVDIDFCKFEEPPSPREGERRCLFVLDPLEHYVESKDRMVELLPGRVETVDGVNTYYINGCTTEEKFPGLDYTCYRVDLRDTYRSRCAVPPEATPEEKFISHRHRKLIPYNSRKPVVVYLPEDAQLHYRIWTGGQEVVAKKAEE.

It belongs to the protease inhibitor I11 (ecotin) family.

The sequence is that of Ecotin-like protein 4 from Trypanosoma brucei brucei (strain 927/4 GUTat10.1).